The chain runs to 539 residues: Phosphoenolpyruvate carboxykinase (ATP) (539 aa).

The substrate site is built by Arg-64, Tyr-206, and Lys-212. Residues Lys-212, His-231, and Gly-247–Thr-255 each bind ATP. Positions 212 and 231 each coordinate Mn(2+). Asp-268 contacts Mn(2+). Residues Glu-296, Arg-332, Arg-448 to Ile-449, and Thr-454 each bind ATP. Arg-332 is a binding site for substrate.

The protein belongs to the phosphoenolpyruvate carboxykinase (ATP) family. As to quaternary structure, monomer. Mn(2+) is required as a cofactor.

Its subcellular location is the cytoplasm. It catalyses the reaction oxaloacetate + ATP = phosphoenolpyruvate + ADP + CO2. The protein operates within carbohydrate biosynthesis; gluconeogenesis. Its function is as follows. Involved in the gluconeogenesis. Catalyzes the conversion of oxaloacetate (OAA) to phosphoenolpyruvate (PEP) through direct phosphoryl transfer between the nucleoside triphosphate and OAA. This is Phosphoenolpyruvate carboxykinase (ATP) from Cronobacter sakazakii (strain ATCC BAA-894) (Enterobacter sakazakii).